The chain runs to 341 residues: Dihydroorotate dehydrogenase (quinone) (341 aa).

FMN contacts are provided by residues 61–65 and threonine 85; that span reads AGLDK. A substrate-binding site is contributed by lysine 65. Position 110 to 114 (110 to 114) interacts with substrate; the sequence is NRMGF. 2 residues coordinate FMN: asparagine 138 and asparagine 171. Asparagine 171 provides a ligand contact to substrate. The active-site Nucleophile is the serine 174. Asparagine 176 is a binding site for substrate. Residues lysine 216 and threonine 244 each contribute to the FMN site. 245 to 246 is a substrate binding site; the sequence is NT. Residues glycine 267, glycine 296, and 317–318 contribute to the FMN site; that span reads YS.

Belongs to the dihydroorotate dehydrogenase family. Type 2 subfamily. Monomer. The cofactor is FMN.

The protein resides in the cell membrane. It carries out the reaction (S)-dihydroorotate + a quinone = orotate + a quinol. It functions in the pathway pyrimidine metabolism; UMP biosynthesis via de novo pathway; orotate from (S)-dihydroorotate (quinone route): step 1/1. Functionally, catalyzes the conversion of dihydroorotate to orotate with quinone as electron acceptor. The protein is Dihydroorotate dehydrogenase (quinone) of Pseudomonas putida (strain W619).